Consider the following 248-residue polypeptide: Large ribosomal subunit protein uL2 (248 aa).

The interval 203–248 (AHPAGGGHHPKGLTPAPRNAPPGRKVGHIAPRRTGRKKGASRTPTQ) is disordered. Basic residues predominate over residues 227–242 (KVGHIAPRRTGRKKGA).

Belongs to the universal ribosomal protein uL2 family. Part of the 50S ribosomal subunit. Forms a bridge to the 30S subunit in the 70S ribosome.

In terms of biological role, one of the primary rRNA binding proteins. Required for association of the 30S and 50S subunits to form the 70S ribosome, for tRNA binding and peptide bond formation. It has been suggested to have peptidyltransferase activity; this is somewhat controversial. Makes several contacts with the 16S rRNA in the 70S ribosome. This chain is Large ribosomal subunit protein uL2, found in Thermofilum pendens (strain DSM 2475 / Hrk 5).